The chain runs to 333 residues: MHKSNCFDTARLVAAMMVLVSHHYALSGQPEPYLFGFESAGGIAVIIFFSISGYLISKSAIRSDSFIDFMAKRARRIFPALVPCSILTYFLFGWILNDFSAEYFSHDIVRKTISSIFMSQAPDADITSHLIHAGINGSLWTLPLEFLCYIITGVAVAHLKNGKAFIVILLVFVSLSLIGSVSENRDVMFSIPLWLYPLRGLAFFFGATMAMYEKSWNVSNVKITVVSLLAMYAYASYGKGIDYTMTCYILVSFSTIAICTSVGDPLVKGRFDYSYGVYIYAFPVQQVVINTLHMGFYPSMLLSAVTVLFLSHLSWNLVEKRFLTRSSPKLSLD.

Belongs to the acyltransferase 3 family.

It is found in the host cell inner membrane. Antigenically converts S.flexneri serotype X to 3a, Y to 3b, 1a to 1b and 4a to 4b by O-acetylating the O-antigenic polysaccharide chain. This chain is O-acetyl transferase (OAC), found in Shigella flexneri (Shigella flexneri bacteriophage VI).